The chain runs to 638 residues: 1,4-alpha-glucan branching enzyme GlgB (638 aa).

Asp303 functions as the Nucleophile in the catalytic mechanism. Glu356 (proton donor) is an active-site residue.

This sequence belongs to the glycosyl hydrolase 13 family. GlgB subfamily. As to quaternary structure, monomer.

It catalyses the reaction Transfers a segment of a (1-&gt;4)-alpha-D-glucan chain to a primary hydroxy group in a similar glucan chain.. Its pathway is glycan biosynthesis; glycogen biosynthesis. Catalyzes the formation of the alpha-1,6-glucosidic linkages in glycogen by scission of a 1,4-alpha-linked oligosaccharide from growing alpha-1,4-glucan chains and the subsequent attachment of the oligosaccharide to the alpha-1,6 position. The sequence is that of 1,4-alpha-glucan branching enzyme GlgB from Lactobacillus acidophilus (strain ATCC 700396 / NCK56 / N2 / NCFM).